We begin with the raw amino-acid sequence, 2285 residues long: Protein Ycf2 (2285 aa).

1638-1645 (GSIGTGRS) is a binding site for ATP.

It belongs to the Ycf2 family.

The protein localises to the plastid. It localises to the chloroplast stroma. In terms of biological role, probable ATPase of unknown function. Its presence in a non-photosynthetic plant (Epifagus virginiana) and experiments in tobacco indicate that it has an essential function which is probably not related to photosynthesis. The sequence is that of Protein Ycf2 from Populus trichocarpa (Western balsam poplar).